Reading from the N-terminus, the 445-residue chain is DNA primase DnaG (445 aa).

The Toprim domain maps to 166–252 (DAIVVVEGRS…SVEDLSRSEV (87 aa)). Residues glutamate 172, aspartate 214, and aspartate 216 each contribute to the Mg(2+) site. The segment at 276 to 355 (EEMSQAGEST…NGDGPTIPSL (80 aa)) is disordered. Residues 284-298 (STTADGGAVAAATSD) are compositionally biased toward low complexity. The segment covering 303–313 (NQPSPSSQTGS) has biased composition (polar residues). The span at 324–337 (SVVDNSNATAVADA) shows a compositional bias: low complexity.

Belongs to the archaeal DnaG primase family. As to quaternary structure, forms a ternary complex with MCM helicase and DNA. The cofactor is Mg(2+).

The catalysed reaction is ssDNA + n NTP = ssDNA/pppN(pN)n-1 hybrid + (n-1) diphosphate.. RNA polymerase that catalyzes the synthesis of short RNA molecules used as primers for DNA polymerase during DNA replication. This is DNA primase DnaG from Haloarcula marismortui (strain ATCC 43049 / DSM 3752 / JCM 8966 / VKM B-1809) (Halobacterium marismortui).